The following is a 127-amino-acid chain: Ribonuclease P protein component 1 (127 aa).

It belongs to the eukaryotic/archaeal RNase P protein component 1 family. Consists of a catalytic RNA component and at least 5 protein subunits. Forms a heterodimeric subcomplex with Rnp4. Reconstituted enzyme missing individual protein subunits is suboptimally active, showing each subunit contributes to optimization of activity.

It localises to the cytoplasm. The catalysed reaction is Endonucleolytic cleavage of RNA, removing 5'-extranucleotides from tRNA precursor.. Its function is as follows. Part of ribonuclease P (RNase P), a protein complex that generates mature tRNA molecules by cleaving their 5'-ends. Binds RNase P RNA. In Pyrococcus horikoshii (strain ATCC 700860 / DSM 12428 / JCM 9974 / NBRC 100139 / OT-3), this protein is Ribonuclease P protein component 1.